The chain runs to 158 residues: Small ribosomal subunit protein uS9 (158 aa).

Over residues 1–20 (MSETMQSLDQLSALKTTQPD) the composition is skewed to polar residues. Residues 1–29 (MSETMQSLDQLSALKTTQPDAPTYTKKVD) form a disordered region.

The protein belongs to the universal ribosomal protein uS9 family.

This is Small ribosomal subunit protein uS9 from Rhodopseudomonas palustris (strain BisB5).